The chain runs to 514 residues: Embryonic protein UVS.2 (514 aa).

The N-terminal stretch at 1–19 (MDVKISAILLACIIQYAVS) is a signal peptide. The 197-residue stretch at 90 to 286 (SAINDARFLW…SKINKLYECN (197 aa)) folds into the Peptidase M12A domain. Asn-112 is a glycosylation site (N-linked (GlcNAc...) asparagine). Intrachain disulfides connect Cys-137–Cys-285, Cys-158–Cys-178, Cys-288–Cys-314, Cys-340–Cys-363, Cys-402–Cys-428, and Cys-455–Cys-475. Residue His-186 participates in Zn(2+) binding. Residue Glu-187 is part of the active site. The Zn(2+) site is built by His-190 and His-196. An N-linked (GlcNAc...) asparagine glycan is attached at Asn-199. CUB domains lie at 288 to 400 (CSNL…YGSI) and 402 to 513 (CGGA…YTFV). Residues Asn-421, Asn-427, and Asn-464 are each glycosylated (N-linked (GlcNAc...) asparagine).

The cofactor is Zn(2+).

The chain is Embryonic protein UVS.2 from Xenopus laevis (African clawed frog).